The primary structure comprises 836 residues: ATP-binding cassette sub-family B member 6 (836 aa).

Topologically, residues 1–26 are lumenal; it reads MVTVGNYCEAEGPAGPAWTQNGLSPC. The tract at residues 1-205 is required for the lysosomal targeting; it reads MVTVGNYCEA…SGGLFILGLW (205 aa). Residues 1–236 are required for ATPase activity; that stretch reads MVTVGNYCEA…RNQGRSTDPR (236 aa). A disulfide bridge links C8 with C26. A helical transmembrane segment spans residues 27 to 47; sequence FFYTLVPSTLMTLGVLALVLV. Residues 48 to 72 lie on the Cytoplasmic side of the membrane; it reads LPCRRREVPAGTEELSWAAGPRVAP. A helical membrane pass occupies residues 73–93; that stretch reads YALQLSLAILQMALPLASLAG. Over 94–106 the chain is Lumenal; sequence RVGTARGVRLPGY. The helical transmembrane segment at 107-127 threads the bilayer; it reads LLLASVLESLASACGLWLLVV. Residues 128–147 are Cytoplasmic-facing; sequence ERSQARQSLAMGVWMKFRHS. The helical transmembrane segment at 148 to 168 threads the bilayer; sequence LGLLLLWTVTFAAENLVLVSW. The Lumenal portion of the chain corresponds to 169 to 185; it reads NSPQWWWSRADLGQQVQ. The helical transmembrane segment at 186 to 206 threads the bilayer; sequence FGLWVLRYMTSGGLFILGLWA. Residues 207 to 264 lie on the Cytoplasmic side of the membrane; it reads PGLRPQSYTLHVNEEDQDGGRNQGRSTDPRSTWRDLGRKLRLLSGYLWPRGSPSLQLT. The helical transmembrane segment at 265-285 threads the bilayer; it reads VLLCMGLMGLDRALNVLVPIF. One can recognise an ABC transmembrane type-1 domain in the interval 265–556; the sequence is VLLCMGLMGL…FGTYYRMIQT (292 aa). Residues 286–305 are Lumenal-facing; sequence YRDIVNLLTSKAPWSSLAWT. A helical membrane pass occupies residues 306 to 326; that stretch reads VTTYVFLKFLQGGGTGSTGFV. At 327–375 the chain is on the cytoplasmic side; it reads SNLRTFLWIRVQQFTSRGVELRLFSHLHELSLRWHLGRRTGEVLRIVDR. The helical transmembrane segment at 376-396 threads the bilayer; it reads GTSSVTGLLSYLVFNIIPTLA. D397 is a topological domain (lumenal). The helical transmembrane segment at 398-418 threads the bilayer; that stretch reads IIIGIIYFSMFFNAWFGLIVF. Over 419–499 the chain is Cytoplasmic; sequence LCMSLYLILT…STASLVLLNQ (81 aa). Residues 500 to 520 form a helical membrane-spanning segment; that stretch reads TQNMVIGFGLLAGSLLCAYFV. Residues 521–529 lie on the Lumenal side of the membrane; sequence SERRLQVGD. The chain crosses the membrane as a helical span at residues 530–550; that stretch reads FVLFGTYITQLYMPLNWFGTY. The Cytoplasmic segment spans residues 551 to 836; that stretch reads YRMIQTNFID…QGQETVPEDS (286 aa). Positions 590–824 constitute an ABC transporter domain; the sequence is VEFENVHFSY…GGVYAEMWQL (235 aa). Residues Y599 and 623 to 634 each bind ATP; that span reads GPSGAGKSTILR.

Belongs to the ABC transporter superfamily. ABCB family. Heavy Metal importer (TC 3.A.1.210) subfamily. Homodimer. N-glycosylated. Ubiquitously expressed. Highly expressed in testis by meiotic pachytene spermatocytes and post-meiotic early spermatids.

The protein resides in the cell membrane. It is found in the mitochondrion outer membrane. The protein localises to the endoplasmic reticulum membrane. Its subcellular location is the golgi apparatus membrane. It localises to the endosome membrane. The protein resides in the lysosome membrane. It is found in the late endosome membrane. The protein localises to the early endosome membrane. Its subcellular location is the secreted. It localises to the extracellular exosome. The protein resides in the mitochondrion. It is found in the endosome. The protein localises to the multivesicular body membrane. Its subcellular location is the melanosome membrane. The catalysed reaction is heme b(in) + ATP + H2O = heme b(out) + ADP + phosphate + H(+). It catalyses the reaction coproporphyrin III(in) + ATP + H2O = coproporphyrin III(out) + ADP + phosphate + H(+). It carries out the reaction pheophorbide a(in) + ATP + H2O = pheophorbide a(out) + ADP + phosphate + H(+). The enzyme catalyses coproporphyrinogen III(in) + ATP + H2O = coproporphyrinogen III(out) + ADP + phosphate + H(+). The catalysed reaction is protoporphyrin IX(in) + ATP + H2O = protoporphyrin IX(out) + ADP + phosphate + H(+). It catalyses the reaction coproporphyrin I(in) + ATP + H2O = coproporphyrin I(out) + ADP + phosphate + H(+). It carries out the reaction uroporphyrin I(in) + ATP + H2O = uroporphyrin I(out) + ADP + phosphate + H(+). The enzyme catalyses uroporphyrin III(in) + ATP + H2O = uroporphyrin III(out) + ADP + phosphate + H(+). Functionally, ATP-dependent transporter that catalyzes the transport of a broad-spectrum of porphyrins from the cytoplasm to the extracellular space through the plasma membrane or into the vesicle lumen. May also function as an ATP-dependent importer of porphyrins from the cytoplasm into the mitochondria, in turn may participate in the de novo heme biosynthesis regulation and in the coordination of heme and iron homeostasis during phenylhydrazine stress. May play a key role in the early steps of melanogenesis producing PMEL amyloid fibrils. In vitro, it confers to cells a resistance to toxic metal such as arsenic and cadmium and against chemotherapeutics agent such as 5-fluorouracil, SN-38 and vincristin. In addition may play a role in the transition metal homeostasis. This chain is ATP-binding cassette sub-family B member 6, found in Rattus norvegicus (Rat).